We begin with the raw amino-acid sequence, 246 residues long: MSESDRLFAQPQQRVADFVFNEDVVRVFPDMIKRSVPGYPTIVENIGVLGAQFAQPNSVLYDLGCSLGAVTQSLRRHVRNDGCRVIGVDNSHAMIERCSEYLHAQDAMYQELLPVELIEADILALDLQPTSLVAMNFTLQFVAPDQRLGLLRRIRQALLPGGALILSEKLRFADAQEHALLTDLHIAFKRANGYSELEIAQKRSALENVMLPDTFEEHRERLLAAGFSRVSQWFQCLNFASMIALP.

Residues Y39, 64–66 (GCS), 89–90 (DN), 121–122 (DI), N136, and R203 each bind S-adenosyl-L-methionine.

This sequence belongs to the class I-like SAM-binding methyltransferase superfamily. Cx-SAM synthase family. As to quaternary structure, homodimer.

The enzyme catalyses prephenate + S-adenosyl-L-methionine = carboxy-S-adenosyl-L-methionine + 3-phenylpyruvate + H2O. Catalyzes the conversion of S-adenosyl-L-methionine (SAM) to carboxy-S-adenosyl-L-methionine (Cx-SAM). The sequence is that of Carboxy-S-adenosyl-L-methionine synthase from Pseudomonas aeruginosa (strain UCBPP-PA14).